Here is a 348-residue protein sequence, read N- to C-terminus: Lipooligosaccharide heptosyltransferase 2 (348 aa).

It belongs to the glycosyltransferase 9 family.

It catalyses the reaction an L-alpha-D-Hep-(1-&gt;5)-[alpha-Kdo-(2-&gt;4)]-alpha-Kdo-(2-&gt;6)-lipid A + ADP-L-glycero-beta-D-manno-heptose = an L-alpha-D-Hep-(1-&gt;3)-L-alpha-D-Hep-(1-&gt;5)-[alpha-Kdo-(2-&gt;4)]-alpha-Kdo-(2-&gt;6)-lipid A + ADP + H(+). Its pathway is bacterial outer membrane biogenesis; LOS core biosynthesis. In terms of biological role, glycosyltransferase involved in the biosynthesis of the core oligosaccharide region of lipooligosaccharide (LOS). Catalyzes the addition of a heptose unit to the heptosyl-Kdo2-lipid A module. This chain is Lipooligosaccharide heptosyltransferase 2, found in Haemophilus ducreyi (strain 35000HP / ATCC 700724).